The sequence spans 362 residues: Large ribosomal subunit protein uL4A (362 aa).

An N-acetylserine modification is found at serine 2. Arginine 95 bears the Omega-N-methylarginine mark. The C-terminal-extended nuclear localization signal stretch occupies residues proline 277–aspartate 362.

Belongs to the universal ribosomal protein uL4 family. In terms of assembly, component of the large ribosomal subunit (LSU). Mature yeast ribosomes consist of a small (40S) and a large (60S) subunit. The 40S small subunit contains 1 molecule of ribosomal RNA (18S rRNA) and 33 different proteins (encoded by 57 genes). The large 60S subunit contains 3 rRNA molecules (25S, 5.8S and 5S rRNA) and 46 different proteins (encoded by 81 genes). uL4 is associated with the polypeptide exit tunnel. uL4 interacts with its chaperone ACL4 and the nuclear import receptor KAP104. In terms of processing, N-terminally acetylated by acetyltransferase NatA.

It localises to the cytoplasm. The protein resides in the nucleus. Its function is as follows. Component of the ribosome, a large ribonucleoprotein complex responsible for the synthesis of proteins in the cell. The small ribosomal subunit (SSU) binds messenger RNAs (mRNAs) and translates the encoded message by selecting cognate aminoacyl-transfer RNA (tRNA) molecules. The large subunit (LSU) contains the ribosomal catalytic site termed the peptidyl transferase center (PTC), which catalyzes the formation of peptide bonds, thereby polymerizing the amino acids delivered by tRNAs into a polypeptide chain. The nascent polypeptides leave the ribosome through a tunnel in the LSU and interact with protein factors that function in enzymatic processing, targeting, and the membrane insertion of nascent chains at the exit of the ribosomal tunnel. uL4 participates in the regulation of the accumulation of its own mRNA. The polypeptide is Large ribosomal subunit protein uL4A (Saccharomyces cerevisiae (strain ATCC 204508 / S288c) (Baker's yeast)).